We begin with the raw amino-acid sequence, 232 residues long: MQKNAAHTYAISSLLVLSLTGCAWIPSTPLVQGATSAQPVLGPTPVANGSIFQSAQPINYGYQPLFEDRRPRNIGDTLTIVLQENVSASKSSSANASRDGKTNFGFDTVPRYLQGLFGNARADVEASGGNTFNGKGGANASNTFSGTLTVTVDQVLVNGNLHVVGEKQIAINQGTEFIRFSGVVNPRTISGSNTVPSTQVADARIEYVGNGYINEAQNMGWLQRFFLNLSPM.

The first 21 residues, 1–21 (MQKNAAHTYAISSLLVLSLTG), serve as a signal peptide directing secretion. The N-palmitoyl cysteine moiety is linked to residue cysteine 22. A lipid anchor (S-diacylglycerol cysteine) is attached at cysteine 22.

It belongs to the FlgH family. As to quaternary structure, the basal body constitutes a major portion of the flagellar organelle and consists of four rings (L,P,S, and M) mounted on a central rod.

Its subcellular location is the cell outer membrane. The protein localises to the bacterial flagellum basal body. Its function is as follows. Assembles around the rod to form the L-ring and probably protects the motor/basal body from shearing forces during rotation. The chain is Flagellar L-ring protein from Shigella dysenteriae serotype 1 (strain Sd197).